Reading from the N-terminus, the 777-residue chain is CRISPR system single-strand-specific deoxyribonuclease Cas10/Csm1 (subtype III-A) (777 aa).

Residues 1–106 (MEIDELTALG…VYEADNLASG (106 aa)) enclose the HD domain. A GGDEF domain is found at 513-660 (RRLGVMKGDV…GRNRVFVVGR (148 aa)).

The protein belongs to the CRISPR-associated Cas10/Csm1 family. As to quaternary structure, probably part of the Csm effector complex, that includes Cas10, Csm2, Csm3, Csm4, Csm5 and mature crRNA. Will form a homodimer in solution, interacts with Csm4, which is a tighter, better association than the homodimeric Cas10 and uses the same interface for interaction. The cofactor is a divalent metal cation.

SsDNase activity is inhibited by EDTA. Functionally, CRISPR (clustered regularly interspaced short palindromic repeat) is an adaptive immune system that provides protection against mobile genetic elements (viruses, transposable elements and conjugative plasmids). CRISPR clusters contain spacers, sequences complementary to antecedent mobile elements, and target invading nucleic acids. CRISPR clusters are transcribed and processed into CRISPR RNA (crRNA). The type III-A Csm effector complex binds crRNA and acts as a crRNA-guided RNase, DNase and cyclic oligoadenylate synthase; binding of target RNA cognate to the crRNA is required for all activities. A single-strand deoxyribonuclease (ssDNase) which digests linear and circular ssDNA; has 5'-3' and 3'-5' exonuclease activity as well as a less efficient endonuclease activity. Has a minimal size requirement; 100 nucleotide ssDNA (nt) is more efficiently digested than 50 or 25 nt ssDNA, while 14 nt ssDNA is not cleaved at all. It has no activity on dsDNA or ssRNA. Its function is as follows. ssDNase activity is stimulated in the ternary Csm effector complex; binding of cognate target RNA activates the ssDNase, as the target RNA is degraded ssDNA activity decreases. In terms of biological role, when associated with the ternary Csm effector complex (the crRNA, Cas proteins and a cognate target ssRNA) synthesizes cyclic oligoadenylates (cOA) from ATP. cOAs are second messengers that stimulate the ssRNase activity of Csm6, inducing an antiviral state important for defense against invading nucleic acids. The protein is CRISPR system single-strand-specific deoxyribonuclease Cas10/Csm1 (subtype III-A) of Thermococcus onnurineus (strain NA1).